We begin with the raw amino-acid sequence, 142 residues long: Type IV pilus subunit protein TapA (142 aa).

Positions Met-1 to Gly-6 are cleaved as a propeptide — leader sequence. Phe-7 carries the post-translational modification N-methylphenylalanine. Residues Phe-7–Leu-27 form a helical membrane-spanning segment.

It belongs to the N-Me-Phe pilin family.

It is found in the membrane. In terms of biological role, major component of the type IV (TAP) pilus. Aeromonas hydrophila possesses two distinct families of type IV pili: the bundle-forming pilus (Bfp) and the type IV pilus (Tap). This is Type IV pilus subunit protein TapA (tapA) from Aeromonas hydrophila.